The chain runs to 1174 residues: MSSDVPLLNDYKQDFLLKRFPQTVLGGPRLKLGYCAPPYIYVNQIVLFLMPWALGGTGTLLYQLDILRDYTAAALSGGLMVFTAAVIQLISVYARSKPVVVRRMRTRDILAEEDQHEFTSCAGAETVKFLIPGKKYVANTVFHSVLAGLVCGLGTWYLLPNRVTLLYGSPGATAVLFVFGWITLCIGEYSLIVNTATETATFQTQDTYEITPLMRPLYIFFFVSVDLAHRFIVNIPALEQMNQILHILFVLLPFLWALGTLPPPDALLFWAVEQVLEFGLGGSSMSTHLRLLVMFIVSAGAAVVSYFIPSTVGVVLFMTGLGFLLSLNPSDVSMVFRYGVTRHRVGSSHEARPGNSGHWFPWKECFLFIAVLGMALLEAGLLHHYVSVPQVSRSGAQAVVGYVLMVLLSIVWILRETQSIYIFGIFRNPFYPKDIHAVSVFYDKQNKLLKIGAVRWILLTLVSPLAMVAFLALDSSLHGLHSVSVSIGFTRAFRMVWQNTETALLETVVVSAVHMVSSTDCWWNRSLDTGIRLLLIGIMRDRLIQFITKLQFAVTVLLALWTEKKQHRKTTTTLCVLNTVFAPFVLGIIVLSTLLSSPLLPLFTLPVFLVGFPRPVQSWPGAVGTAACVCTDSVFYHQMVPRLTAALQTAMAAGSLGLLLPGSHYLGRFEDRLIWIMILECGYTYCCINVKGLELQETSCHTAEAQRVDEVFESAFQREHPQVCSLNEHLENVLTPCTVLPVKLYSDARNVLTGIIDSPDNLKEFKDDLIKVLVWVLIQHCSKRPSTQENKTENTGEASPALPPAANSSPCPESLEDSESANSDWSDGSIFDDEPAIKNRKEKLQSKDLPCTKLPIPGSVDSQNPDDHSAGTGPKNDLYRTVILGLPAVDKGQREDVAYIPLVEFSCSQSRLLSLPEEWRSNSTPRSKILEMSALFPEDWYQFVLRQLECFHSEEKSRVLEEIAKDKALKDLYVHTVMACYIGLFGIDNGVPSPGQLVRVYNGGLPWAGTLDWLSEKPELFHLVRKAFRYTLKLMVDKASLGPIEDFKELTNCLREYERDWYIGLVSEEQWKRAILEEKPCLFCLGYESSMGVYTSRVLMLQEMSVHIGKLNAEAVRGQWANLSWELLYATNDDEERYSIQAHPLLLRNLTVQAADPPLGYPIFSSKPLPIHLC.

14 consecutive transmembrane segments (helical) span residues 40–60, 72–92, 140–160, 173–193, 217–237, 244–264, 284–304, 307–327, 366–386, 394–414, 451–471, 543–563, 580–600, and 643–663; these read IYVNQIVLFLMPWALGGTGTL, AAALSGGLMVFTAAVIQLISV, TVFHSVLAGLVCGLGTWYLLP, TAVLFVFGWITLCIGEYSLIV, LYIFFFVSVDLAHRFIVNIPA, ILHILFVLLPFLWALGTLPPP, SMSTHLRLLVMFIVSAGAAVV, FIPSTVGVVLFMTGLGFLLSL, FLFIAVLGMALLEAGLLHHYV, SGAQAVVGYVLMVLLSIVWIL, IGAVRWILLTLVSPLAMVAFL, LIQFITKLQFAVTVLLALWTE, VFAPFVLGIIVLSTLLSSPLL, and LTAALQTAMAAGSLGLLLPGS. Over residues 785 to 797 the composition is skewed to polar residues; that stretch reads PSTQENKTENTGE. The disordered stretch occupies residues 785 to 875; that stretch reads PSTQENKTEN…DDHSAGTGPK (91 aa). An N-linked (GlcNAc...) asparagine glycan is attached at Asn-790. Residues 798-810 show a composition bias toward low complexity; sequence ASPALPPAANSSP. The segment covering 835–846 has biased composition (basic and acidic residues); it reads PAIKNRKEKLQS. N-linked (GlcNAc...) asparagine glycans are attached at residues Asn-1122 and Asn-1149.

The protein belongs to the pecanex family.

Its subcellular location is the membrane. The protein is Pecanex-like protein 4 of Mus musculus (Mouse).